We begin with the raw amino-acid sequence, 454 residues long: Laccase-3 (454 aa).

2 Plastocyanin-like domains span residues 1–95 (PGPT…GPAT) and 101–252 (DLGV…YSGA). An N-linked (GlcNAc...) asparagine glycan is attached at Asn-24. Residues His-29, His-31, His-73, and His-75 each contribute to the Cu cation site. N-linked (GlcNAc...) asparagine glycans are attached at residues Asn-138, Asn-169, Asn-218, Asn-314, and Asn-334. One can recognise a Plastocyanin-like 3 domain in the interval 319–454 (DVDWKKPILQ…SEGLAVQFQG (136 aa)). The Cu cation site is built by His-375, His-378, and His-380. A glycan (N-linked (GlcNAc...) asparagine) is linked at Asn-395. Positions 437, 438, 439, and 443 each coordinate Cu cation.

Belongs to the multicopper oxidase family. It depends on Cu cation as a cofactor.

Its subcellular location is the secreted. The enzyme catalyses 4 hydroquinone + O2 = 4 benzosemiquinone + 2 H2O. Its function is as follows. Lignin degradation and detoxification of lignin-derived products. The sequence is that of Laccase-3 (lcc3) from Botryotinia fuckeliana (Noble rot fungus).